A 1224-amino-acid polypeptide reads, in one-letter code: MEGGESTESTHNTKVSDSAYSNSCSNSQSQRSGSSKSRLSGSHSSGSSGYGGKPSTQASSSDMIIKRNKDKSRKKKKNKGAGQGAGQAQTLISASTSLEGRDEEKPRPSGTGCVEQQICRELQDQQHGEDHSEPQAIEQLQQEEEEDQSGSESEADRVEGVAKSEAAQSFPIPSPLSVTIVPPSMGGCGGVGHAAGLDSGLAKFDKTWEAGPGKLESMTGVGAAAAGTGQRGERVKEDSFCCVISMHDGIVLYTTPSITDVLGYPRDMWLGRSFIDFVHLKDRATFASQITTGIPIAESRGSVPKDAKSTFCVMLRRYRGLKSGGFGVIGRPVSYEPFRLGLTFREAPEEARPDNYMVSNGTNMLLVICATPIKSSYKVPDEILSQKSPKFAIRHTATGIISHVDSAAVSALGYLPQDLIGRSIMDFYHHEDLSVMKETYETVMKKGQTAGASFCSKPYRFLIQNGCYVLLETEWTSFVNPWSRKLEFVVGHHRVFQGPKQCNVFEAAPTCKLKISEEAQSRNTRIKEDIVKRLAETVSRPSDTVKQEVSRRCQALASFMETLMDEVSRADLKLELPHENELTVSERDSVMLGEISPHHDYYDSKSSTETPPSYNQLNYNENLLRFFNSKPVTAPAELDPPKTEPPEPRGTCVSGASGPMSPVHEGSGGSGSSGNFTTASNIHMSSVTNTSIAGTGGTGTGTGTGTGTGTGTGTGTGTGTGTGTGTGTGTGTGTGTGTGTGTGNGTNSGTGTGTASSSKGGTAAIPPVTLTESLLNKHNDEMEKFMLKKHRESRGRTGEKSKKSANDTLKMLEYSGPGHGIKRGGSHSWEGEANKPKQQLTLGTDAIKGAAGSAGGAVGTGGVGSGGAGVAGGGGSGTGVAGTPEGRATTTSGTGTPGGAGGGGGAGAAAAAGASSSVGSSTPGPSSYPTCTQNINLWPPFSVGITPPVHSTHTAMAQSSFSSAGLFPTFYYIPASLTPTSPTRSPRMHKHPHKGGTDMPTTSQQAAAAAAQAMPLQYMAGVMYPHPSLFYTHPAAAAATAMMYQPMPFPGMANALQIPERPLGSQSAYNKSVYTTTPASMTKKVPGAFHSVTTPAQVQRPSSQSASVKTEPGSSAAVSDPCKKEVPDSSPIPSVMGDYNSDPPCSSSNPANNKKYTDSNGNSDDMDGSSFSSFYSSFIKTTDGSESPPDTEKDPKHRKLKSMSTSESKIMEHPEEDQTQHGDG.

Positions 1–15 are enriched in polar residues; the sequence is MEGGESTESTHNTKV. The tract at residues 1-175 is disordered; sequence MEGGESTEST…AAQSFPIPSP (175 aa). Positions 16–47 are enriched in low complexity; sequence SDSAYSNSCSNSQSQRSGSSKSRLSGSHSSGS. The Nuclear localization signal signature appears at 66-79; sequence KRNKDKSRKKKKNK. Positions 66 to 79 are enriched in basic residues; the sequence is KRNKDKSRKKKKNK. Positions 121–133 are enriched in basic and acidic residues; that stretch reads ELQDQQHGEDHSE. PAS domains follow at residues 238-373 and 391-497; these read DSFC…ATPI and FAIR…RVFQ. Disordered stretches follow at residues 632-764, 788-807, 874-927, 978-1008, and 1094-1224; these read VTAP…GTAA, KKHR…SAND, GGSG…GPSS, TPTS…QAAA, and TPAQ…HGDG. The span at 675-693 shows a compositional bias: polar residues; sequence NFTTASNIHMSSVTNTSIA. 26 tandem repeats follow at residues 694–695, 697–698, 699–700, 701–702, 703–704, 705–706, 707–708, 709–710, 711–712, 713–714, 715–716, 717–718, 719–720, 721–722, 723–724, 725–726, 727–728, 729–730, 731–732, 733–734, 735–736, 737–738, 739–740, 741–742, 743–744, and 745–746. Gly residues predominate over residues 694-752; it reads GTGGTGTGTGTGTGTGTGTGTGTGTGTGTGTGTGTGTGTGTGTGTGTGTGNGTNSGTGT. Residues 694–754 form a 30 X 2 AA approximate tandem repeats of G-[TN] region; it reads GTGGTGTGTG…GTNSGTGTGT (61 aa). The stretch at 747–748 is one 27; approximate repeat; sequence NS. 3 tandem repeats follow at residues 749 to 750, 751 to 752, and 753 to 754. Residues 749 to 868 are regulates the rhythm of species-specific courtship song; the sequence is GTGTGTASSS…GTGGVGSGGA (120 aa). A compositionally biased stretch (basic and acidic residues) spans 794–805; it reads RGRTGEKSKKSA. Residues 895–907 are compositionally biased toward gly residues; sequence GTPGGAGGGGGAG. The span at 908–927 shows a compositional bias: low complexity; it reads AAAAAGASSSVGSSTPGPSS. 2 stretches are compositionally biased toward polar residues: residues 1094-1117 and 1143-1154; these read TPAQ…SSAA and PPCSSSNPANNK. The segment covering 1158–1177 has biased composition (low complexity); it reads DSNGNSDDMDGSSFSSFYSS. Residues 1209–1224 are compositionally biased toward basic and acidic residues; sequence KIMEHPEEDQTQHGDG.

In terms of assembly, forms a heterodimer with timeless (TIM); the complex then translocates into the nucleus. A proportion of the protein exists as homodimer. Post-translationally, phosphorylated with a circadian rhythmicity, probably by the double-time protein (dbt). Phosphorylation could be implicated in the stability of per monomer and in the formation of heterodimer per-tim. As to expression, expressed in neural tissues and in several nonneural tissues of the abdomen. Malpighian tubules contain a circadian pacemaker that functions independently of the brain. Expression oscillates in all tissues studied except for the ovary. PER-A isoforms are mainly expressed in adult's head.

It localises to the nucleus. The protein resides in the cytoplasm. The protein localises to the perinuclear region. Its subcellular location is the cytosol. Essential for biological clock functions. Determines the period length of circadian and ultradian rhythms; an increase in PER dosage leads to shortened circadian rhythms and a decrease leads to lengthened circadian rhythms. Essential for the circadian rhythmicity of locomotor activity, eclosion behavior, and for the rhythmic component of the male courtship song that originates in the thoracic nervous system. The biological cycle depends on the rhythmic formation and nuclear localization of the TIM-PER complex. Light induces the degradation of TIM, which promotes elimination of PER. Nuclear activity of the heterodimer coordinatively regulates PER and TIM transcription through a negative feedback loop. Behaves as a negative element in circadian transcriptional loop. Does not appear to bind DNA, suggesting indirect transcriptional inhibition. Required for binding of cwo to the E box regions in the promoters of target genes of the transcriptional activator Clock, probably by binding to Clock-cycle heterodimers, reducing their affinity for E box binding and allowing cwo to bind instead. This chain is Period circadian protein (per), found in Drosophila melanogaster (Fruit fly).